The following is a 124-amino-acid chain: U33-theraphotoxin-Cg1c (124 aa).

The first 17 residues, 1-17 (MKFAVAIAFTLLVCVFA), serve as a signal peptide directing secretion. 5 disulfides stabilise this stretch: Cys-26–Cys-37, Cys-31–Cys-51, Cys-36–Cys-75, Cys-61–Cys-83, and Cys-77–Cys-94. Residues 93-108 (RCQEESGKSDKSKESQ) are compositionally biased toward basic and acidic residues. The disordered stretch occupies residues 93-124 (RCQEESGKSDKSKESQGSDESEESEESKESSG). The span at 109–118 (GSDESEESEE) shows a compositional bias: acidic residues.

This sequence belongs to the neurotoxin 32 family. In terms of tissue distribution, expressed by the venom gland.

It localises to the secreted. This chain is U33-theraphotoxin-Cg1c, found in Chilobrachys guangxiensis (Chinese earth tiger tarantula).